Reading from the N-terminus, the 429-residue chain is Probable M18 family aminopeptidase 2 (429 aa).

Zn(2+) is bound by residues His-82, His-156, and His-401.

This sequence belongs to the peptidase M18 family. The cofactor is Zn(2+).

The polypeptide is Probable M18 family aminopeptidase 2 (Stutzerimonas stutzeri (strain A1501) (Pseudomonas stutzeri)).